The following is a 468-amino-acid chain: ATP synthase subunit beta (468 aa).

148 to 155 contributes to the ATP binding site; the sequence is GGAGVGKT.

Belongs to the ATPase alpha/beta chains family. In terms of assembly, F-type ATPases have 2 components, CF(1) - the catalytic core - and CF(0) - the membrane proton channel. CF(1) has five subunits: alpha(3), beta(3), gamma(1), delta(1), epsilon(1). CF(0) has three main subunits: a(1), b(2) and c(9-12). The alpha and beta chains form an alternating ring which encloses part of the gamma chain. CF(1) is attached to CF(0) by a central stalk formed by the gamma and epsilon chains, while a peripheral stalk is formed by the delta and b chains.

The protein localises to the cell inner membrane. The catalysed reaction is ATP + H2O + 4 H(+)(in) = ADP + phosphate + 5 H(+)(out). Functionally, produces ATP from ADP in the presence of a proton gradient across the membrane. The catalytic sites are hosted primarily by the beta subunits. This chain is ATP synthase subunit beta, found in Stenotrophomonas maltophilia (strain R551-3).